The primary structure comprises 278 residues: Diaminopimelate epimerase (278 aa).

Substrate contacts are provided by Asn-13, Gln-46, and Asn-67. Residue Cys-76 is the Proton donor of the active site. Substrate is bound by residues 77–78 (GN), Asn-160, Asn-193, and 211–212 (ER). Cys-220 (proton acceptor) is an active-site residue. 221-222 (GT) contributes to the substrate binding site.

The protein belongs to the diaminopimelate epimerase family. Homodimer.

It is found in the cytoplasm. The catalysed reaction is (2S,6S)-2,6-diaminopimelate = meso-2,6-diaminopimelate. It participates in amino-acid biosynthesis; L-lysine biosynthesis via DAP pathway; DL-2,6-diaminopimelate from LL-2,6-diaminopimelate: step 1/1. Functionally, catalyzes the stereoinversion of LL-2,6-diaminopimelate (L,L-DAP) to meso-diaminopimelate (meso-DAP), a precursor of L-lysine and an essential component of the bacterial peptidoglycan. The polypeptide is Diaminopimelate epimerase (Thioalkalivibrio sulfidiphilus (strain HL-EbGR7)).